The sequence spans 201 residues: Type III effector protein HopBF1 (201 aa).

ATP-binding residues include S39, Q40, K41, D106, I108, and D113. Residue D154 is part of the active site. Position 156 (Q156) interacts with ATP.

It belongs to the HopBF1 family.

It is found in the secreted. It localises to the host cell. It carries out the reaction L-seryl-[protein] + ATP = O-phospho-L-seryl-[protein] + ADP + H(+). In terms of biological role, effector protein that targets and inactivates the plant molecular chaperone HSP90 during infection. HopBF1 is recognized by HSP90 as a host client. As a result, HopBF1 phosphorylates HSP90, leading to the inactivation of the HSP90 ATPase activity and chaperone function. Phosphorylation of HSP90 prevents activation of immune receptors that trigger the hypersensitive response in plants. HopBF1 is sufficient to cause severe disease symptoms in plants infected with P.syringae. In vitro, can phosphorylate the recombinant yeast HSP82 (HSP90) on Ser-99, Triticum aestivum (wheat) HSP90 and human HSP 90-beta, but not the prokaryotic HSP90 orthologs, HtpG from E.coli and P.syringae. Does not act on generic protein kinase substrates such as casein and myelin basic protein, as well as the yeast HSP70s and Bip chaperones. The protein is Type III effector protein HopBF1 of Pseudomonas syringae pv. syringae (strain FF5).